The sequence spans 59 residues: MDVPYDLTSYIRVLKLASTPSWEEFSQIAKIAGAGIALVGLLGFIIFAVMTFVPGSKPV.

The chain crosses the membrane as a helical span at residues 33–53 (GAGIALVGLLGFIIFAVMTFV).

The protein belongs to the SecE/SEC61-gamma family. Component of the Sec protein translocase complex. Heterotrimer consisting of SecY (alpha), SecG (beta) and SecE (gamma) subunits. The heterotrimers can form oligomers, although 1 heterotrimer is thought to be able to translocate proteins. Interacts with the ribosome. May interact with SecDF, and other proteins may be involved.

It localises to the cell membrane. Functionally, essential subunit of the Sec protein translocation channel SecYEG. Clamps together the 2 halves of SecY. May contact the channel plug during translocation. This chain is Protein translocase subunit SecE, found in Haloarcula marismortui (strain ATCC 43049 / DSM 3752 / JCM 8966 / VKM B-1809) (Halobacterium marismortui).